A 307-amino-acid chain; its full sequence is Protein ORANGE, chloroplastic (307 aa).

The N-terminal 55 residues, 1–55 (MSSLGRILSVSYPPDPYTWRFSQYKLSSSLGRNRRLRWRFTALDPESSSLDSESS), are a transit peptide targeting the chloroplast. Residue Lys58 forms a Glycyl lysine isopeptide (Lys-Gly) (interchain with G-Cter in ubiquitin) linkage. 2 helical membrane-spanning segments follow: residues 146 to 166 (VYYA…GLLA) and 199 to 219 (IVAS…VVEV). The CR-type-like stretch occupies residues 208–299 (VGVISALMVV…CTGMAMASEH (92 aa)). Residues 230–237 (CKYCLGTG) form a CXXCXGXG motif repeat. The stretch at 241–248 (CARCSSTG) is one CXXCXXXG motif repeat. A CXXCXGXG motif repeat occupies 274 to 281 (CSNCSGAG). The stretch at 285 to 292 (CPTCLCTG) is one CXXCXXXG motif repeat.

Belongs to the orange-like family. In terms of assembly, interacts with the phytoene synthase PSY1 in chloroplast. Binds to the eukaryotic release factor eRF1-2. Interacts with the transcription factor TCP14 in the nucleus to repress chloroplast biogenesis in etiolated seedlings. Associates to the E2 ubiquitin-conjugating enzyme UBC19. In terms of processing, ubiquitination at K-58 by UBC19 is essential for nuclear localization.

The protein localises to the plastid. Its subcellular location is the chloroplast membrane. It localises to the nucleus. The protein resides in the cytoplasm. Its function is as follows. Involved in chromoplast differentiation. Associated with a cellular process that triggers the differentiation of pro-plastids or other non-colored plastids into chromoplasts for carotenoid accumulation. Is associated with carotenoid accumulation in chromoplasts. Functions as a major regulator of the phytoene synthase PSY1 protein level and activity. Modulates carotenoid biosynthesis by means of post-transcriptional regulation of PSY1. Modulates carotenoid biosynthesis in part by up-regulating a series of endogenous carotenogenic genes. Regulates cell elongation in the petiole in an eRF1-2-dependent manner. Binds to and represses TCP14 transactivation activity, thus preventing early light-induced proteins (ELIPs, e.g. ELIP1 and ELIP2) expression and delaying chloroplast biogenesis (e.g. lower chlorophyll biosynthesis and slower development of thylakoid membranes) in germinating cotyledons and etiolated seedlings; reduced levels upon illumination combined to TCP14 accumulation derepress chloroplast biogenesis during deetiolation. In Arabidopsis thaliana (Mouse-ear cress), this protein is Protein ORANGE, chloroplastic.